Consider the following 182-residue polypeptide: A-type ATP synthase subunit E (182 aa).

The protein belongs to the V-ATPase E subunit family. Has multiple subunits with at least A(3), B(3), C, D, E, F, H, I and proteolipid K(x).

The protein localises to the cell membrane. In terms of biological role, component of the A-type ATP synthase that produces ATP from ADP in the presence of a proton gradient across the membrane. The polypeptide is A-type ATP synthase subunit E (Picrophilus torridus (strain ATCC 700027 / DSM 9790 / JCM 10055 / NBRC 100828 / KAW 2/3)).